We begin with the raw amino-acid sequence, 94 residues long: Defensin alpha 5 (94 aa).

A signal peptide spans 1–19 (MRTIAILAAILLVALQAQA). Disulfide bonds link cysteine 65-cysteine 93, cysteine 67-cysteine 82, and cysteine 72-cysteine 92.

Belongs to the alpha-defensin family. Homodimer. Homotetramer. Interacts with B.antracis lef/lethal factor. In terms of processing, glycosylated. Proteolytically cleaved at Arg-62 by trypsin. Both the propeptide form proHD5/HD5(20-94) and HD5(56-94) are cleaved into the lumenal peptide form HD5(63-94) by trypsin. Unprocessed proHD5 exerts antimicrobial activities, but peptide potency is enhanced by peptide processing. Proteolytically cleaved in duodenal fluid; derived fragments are antimicrobially active against commensal bacteria (in vitro). Post-translationally, (Microbial infection) The disulfide bridges and homodimerization are a prerequisite for the enhancement of S.flexneri adhesion and invasion. Expressed in the gastrointestinal, reproductive, and urinary tracts (at protein level). Expressed in Paneth cells of the small intestine (at protein level). Expressed throughout the urothelium of the lower urinary tract and in the collecting tubules of the kidney (at protein level). Expressed in stratified squamous epithelial cells of the female genital tract epithelia, such as in vagina, ectocervix, endocervix, endometrium, and fallopian tube (at protein level). Endometrial expression correlates with stages of the menstrual cycle: Expression is low during the early proliferative phase, increased during the mid- to late proliferative phase, peaks during the early secretory phase of the cycle, and decreases during the mid- to late secretory phase.

The protein resides in the secreted. It localises to the cytoplasmic vesicle. Its subcellular location is the secretory vesicle. Host-defense peptide that maintains sterility in the urogenital system. Has antimicrobial activity against a wide range of bacteria, including Gram-negative E.coli, P.aeruginosa and S.typhimurium, and Gram-positive E.aerogenes, S.aureus, B.cereus, E.faecium and L.monocytogenes. Confers resistance to intestinal infection by S.typhimurium. Exhibits antimicrobial activity against enteric commensal bacteria such as B.adolescentis, L.acidophilus, B.breve, L.fermentum, B.longum and S.thermophilus. Binds to bacterial membranes and causes membrane disintegration. Induces the secretion of the chemokine IL-8 by intestinal epithelial cells. Binds to B.antracis lef/lethal factor, a major virulence factor from B.anthracis, and neutralizes its enzymatic activity. Its function is as follows. (Microbial infection) Acts as a target for S.flexneri infection by binding to the bacterium, possibly via bacterial surface proteins, and thereby augmenting infectivity via enhanced bacterial adhesion and invasion of epithelial cells and tissues. The polypeptide is Defensin alpha 5 (DEFA5) (Homo sapiens (Human)).